A 624-amino-acid polypeptide reads, in one-letter code: Protein NRT1/ PTR FAMILY 6.1 (624 aa).

The interval M1–S20 is disordered. 2 helical membrane-spanning segments follow: residues M83–M100 and F114–G134. T138 carries the phosphothreonine modification. A run of 10 helical transmembrane segments spans residues I139–L159, S184–I204, F230–V250, W258–A278, L378–L398, V422–I442, V459–Y479, W504–L524, S537–L557, and C585–A605.

The protein belongs to the major facilitator superfamily. Proton-dependent oligopeptide transporter (POT/PTR) (TC 2.A.17) family. As to expression, expressed in flower and siliques.

Its subcellular location is the membrane. The chain is Protein NRT1/ PTR FAMILY 6.1 (NPF6.1) from Arabidopsis thaliana (Mouse-ear cress).